A 437-amino-acid chain; its full sequence is Histidinol dehydrogenase (437 aa).

Positions 133, 191, and 214 each coordinate NAD(+). Residues S240, Q262, and H265 each contribute to the substrate site. Zn(2+) contacts are provided by Q262 and H265. Active-site proton acceptor residues include E329 and H330. 4 residues coordinate substrate: H330, D363, E417, and H422. D363 contributes to the Zn(2+) binding site. Position 422 (H422) interacts with Zn(2+).

The protein belongs to the histidinol dehydrogenase family. As to quaternary structure, homodimer. The cofactor is Zn(2+).

It carries out the reaction L-histidinol + 2 NAD(+) + H2O = L-histidine + 2 NADH + 3 H(+). It functions in the pathway amino-acid biosynthesis; L-histidine biosynthesis; L-histidine from 5-phospho-alpha-D-ribose 1-diphosphate: step 9/9. Functionally, catalyzes the sequential NAD-dependent oxidations of L-histidinol to L-histidinaldehyde and then to L-histidine. This is Histidinol dehydrogenase from Blochmanniella floridana.